The chain runs to 499 residues: WD repeat-containing protein 55 homolog (499 aa).

Residues 1–130 are disordered; the sequence is MHTHNNFKTP…EATFDLDVDD (130 aa). Acidic residues-rich tracts occupy residues 12 to 23 and 31 to 48; these read DEDELDDLDEDM and IEQE…EYDL. Residues 91 to 103 are compositionally biased toward low complexity; sequence DDAGGASAGGATS. Positions 113–122 are enriched in polar residues; sequence PSGSNRQSEA. WD repeat units follow at residues 154–193, 198–237, 241–279, 282–321, 324–363, and 408–447; these read KLED…NKLL, VHSK…LKKL, AHDD…AIFE, ELED…MYVQ, PYEE…YHCD, and QHNM…DFGD. The interval 480 to 499 is disordered; it reads TKEDADDDDHDPSAGPSNMA.

The protein belongs to the WD repeat WDR55 family.

The polypeptide is WD repeat-containing protein 55 homolog (Drosophila yakuba (Fruit fly)).